Consider the following 274-residue polypeptide: Penicillin-insensitive murein endopeptidase (274 aa).

Positions 1-19 (MKKTAIALLAWFVSSASLA) are cleaved as a signal peptide. Disulfide bonds link Cys-44/Cys-265, Cys-187/Cys-235, and Cys-216/Cys-223. Residues His-110, His-113, Asp-120, Asp-147, His-150, and His-211 each contribute to the Zn(2+) site. Positions 225 to 274 (DQPLPPPGDGCGAELQSWFEPPKPGTTKPEKKTPPPLPPSCQALLDEHVL) are disordered.

The protein belongs to the peptidase M74 family. As to quaternary structure, dimer. The cofactor is Zn(2+).

It localises to the periplasm. In terms of biological role, murein endopeptidase that cleaves the D-alanyl-meso-2,6-diamino-pimelyl amide bond that connects peptidoglycan strands. Likely plays a role in the removal of murein from the sacculus. The sequence is that of Penicillin-insensitive murein endopeptidase from Salmonella agona (strain SL483).